The primary structure comprises 749 residues: MDVRAALQCFFSALSGRFTGKKLGLEIYSIQYKMSNSGGSSPFLESPGGSPDVGSTNGQSNRQIQALQFKLNTLQNEYEIEKLQLQKQTNILEKKYKATIDELEKALNDTKYLYESNDKLEQELKSLKERSANSMNDKDKCIEELRTTLQNKDLEMETLRQQYDSKLSKVTNQCDHFKLEAESSHSLLMKYEKEIKRQSVDIKDLQHQVMEKDDELSSVKASKMINSHPNYSTEEFNELTEMNKMIQDQVQYTKELELANMQQANELKKLKQSQDTSTFWKLENEKLQNKLSQLHVLESQYENLQLENIDLKSKLTKWEIYNDSDDDDDNNVNNNDNNNNNKNDNNNDNNNDTSNNNNINNNNRTKNNIRNNPEEIIRDWKLTKKECLILTDMNDKLRLDNNNLKLLNDEMALERNQILDLNKNYENNIVNLKRLNHELEQQKSLSFEECRLLREQLDGLYSAQNNALLEVENSETHASNKNVNEDMNNLIDTYKNKTEDLTNELKKLNDQLLSNSNDVETQRKKRKLTSDQIGLNYSQRLNELQLENVSVSRELSKAQTTIQLLQEKLEKLTKLKEKKIRILQLRDGPFIKDQFIKKNKLLLLEKENADLLNELKKNNPAVETVPISVYDSLNFELKQFEQEVFKSNKRFSRLKQVFNNKSLEFIDVVNSLLGFKLEFQQDSRVKIFSCFKPEKYLIADLNENTLKSNLDADIEGWDDLMNLWVEDRGQLPCFLATITLRLWEQRQAK.

2 disordered regions span residues 39-59 and 323-370; these read GSSP…TNGQ and DSDD…NNIR. A coiled-coil region spans residues 57–324; the sequence is NGQSNRQIQA…LTKWEIYNDS (268 aa). Residues 331–370 are compositionally biased toward low complexity; sequence NVNNNDNNNNNKNDNNNDNNNDTSNNNNINNNNRTKNNIR. Positions 390–656 form a coiled coil; that stretch reads LTDMNDKLRL…SNKRFSRLKQ (267 aa). Threonine 502 is modified (phosphothreonine).

Belongs to the MAD1 family. Forms a stable heteromer with MAD2 throughout the cell cycle. Part of complex consisting of MAD1, BUB1 and BUB3 after activation of spindle checkpoint. Post-translationally, becomes hyperphosphorylated when wild-type cells are arrested in mitosis. Phosphorylated by MPS1.

It is found in the nucleus. Central component of the spindle assembly checkpoint. Thought to recruit MAD2 to unattached kinetochores. During checkpoint activity, MAD2 is relayed from the MAD1-MAD2 complex to the mitotic checkpoint complex (MCC). The formation of a MAD1-BUB1-BUB3 complex seems to be required for the spindle checkpoint mechanism. The sequence is that of Spindle assembly checkpoint component MAD1 (MAD1) from Saccharomyces cerevisiae (strain ATCC 204508 / S288c) (Baker's yeast).